Reading from the N-terminus, the 231-residue chain is LexA repressor (231 aa).

Residues 26-46 (FEEMKEALDLKSKSGIHRLIG) constitute a DNA-binding region (H-T-H motif). Active-site for autocatalytic cleavage activity residues include Ser-152 and Lys-190.

It belongs to the peptidase S24 family. Homodimer.

The catalysed reaction is Hydrolysis of Ala-|-Gly bond in repressor LexA.. In terms of biological role, represses a number of genes involved in the response to DNA damage (SOS response), including recA and lexA. In the presence of single-stranded DNA, RecA interacts with LexA causing an autocatalytic cleavage which disrupts the DNA-binding part of LexA, leading to derepression of the SOS regulon and eventually DNA repair. In Acidiphilium cryptum (strain JF-5), this protein is LexA repressor.